We begin with the raw amino-acid sequence, 1342 residues long: DNA-directed RNA polymerase subunit beta (1342 aa).

It belongs to the RNA polymerase beta chain family. In terms of assembly, the RNAP catalytic core consists of 2 alpha, 1 beta, 1 beta' and 1 omega subunit. When a sigma factor is associated with the core the holoenzyme is formed, which can initiate transcription.

The catalysed reaction is RNA(n) + a ribonucleoside 5'-triphosphate = RNA(n+1) + diphosphate. Functionally, DNA-dependent RNA polymerase catalyzes the transcription of DNA into RNA using the four ribonucleoside triphosphates as substrates. This is DNA-directed RNA polymerase subunit beta from Vibrio campbellii (strain ATCC BAA-1116).